Reading from the N-terminus, the 358-residue chain is MKLTVTLPTHSYDLTIETGALDKIGTWVRSLWQPQRVAIITDETVNKLYGAAVEKELQAAGFETSLIAVAAGEQSKSLETAQLLYDFLAEQQLTRSDGLIALGGGVVGDLAGFVASTYMRGIHFLQVPTTLLAQVDSSIGGKTAVNTKKAKNLVGTFAQPDGVLIDPNTLKTLEPRRVREGIAEIVKSAAIADVELWHRLSSLENEQDLVAHAEEIITACCKIKRDVVEEDELDLGLRLILNFGHTIGHALENTAGYGVIAHGEGVSLGMIQITQVAEQQGLSPLGTTQELVTMLEKFHLPVTTDRWSEERLYQAITHDKKTRGGQIKIIVLEKIGQAKIVSLPTEEIRAFLNREGGI.

NAD(+) is bound by residues Gly-105–Asp-109, Thr-129–Thr-130, Lys-142, Lys-151, and Thr-169–Thr-172. The Zn(2+) site is built by Glu-184, His-245, and His-262.

Belongs to the sugar phosphate cyclases superfamily. Dehydroquinate synthase family. Requires NAD(+) as cofactor. Co(2+) serves as cofactor. It depends on Zn(2+) as a cofactor.

Its subcellular location is the cytoplasm. The enzyme catalyses 7-phospho-2-dehydro-3-deoxy-D-arabino-heptonate = 3-dehydroquinate + phosphate. It functions in the pathway metabolic intermediate biosynthesis; chorismate biosynthesis; chorismate from D-erythrose 4-phosphate and phosphoenolpyruvate: step 2/7. Functionally, catalyzes the conversion of 3-deoxy-D-arabino-heptulosonate 7-phosphate (DAHP) to dehydroquinate (DHQ). This Enterococcus faecalis (strain ATCC 47077 / OG1RF) protein is 3-dehydroquinate synthase.